Here is a 367-residue protein sequence, read N- to C-terminus: Peptide chain release factor 2 (367 aa).

N5-methylglutamine is present on glutamine 254.

Belongs to the prokaryotic/mitochondrial release factor family. In terms of processing, methylated by PrmC. Methylation increases the termination efficiency of RF2.

The protein localises to the cytoplasm. In terms of biological role, peptide chain release factor 2 directs the termination of translation in response to the peptide chain termination codons UGA and UAA. The chain is Peptide chain release factor 2 from Neisseria meningitidis serogroup A / serotype 4A (strain DSM 15465 / Z2491).